Reading from the N-terminus, the 545-residue chain is Glucose-6-phosphate isomerase (545 aa).

The Proton donor role is filled by E351. Residues H382 and K510 contribute to the active site.

Belongs to the GPI family.

The protein resides in the cytoplasm. The catalysed reaction is alpha-D-glucose 6-phosphate = beta-D-fructose 6-phosphate. Its pathway is carbohydrate biosynthesis; gluconeogenesis. The protein operates within carbohydrate degradation; glycolysis; D-glyceraldehyde 3-phosphate and glycerone phosphate from D-glucose: step 2/4. Its function is as follows. Catalyzes the reversible isomerization of glucose-6-phosphate to fructose-6-phosphate. This chain is Glucose-6-phosphate isomerase, found in Shewanella baltica (strain OS195).